A 271-amino-acid polypeptide reads, in one-letter code: Beta-lactamase (271 aa).

Residue S46 is the Acyl-ester intermediate of the active site. Residue 210-212 participates in substrate binding; it reads KTG.

Belongs to the class-A beta-lactamase family. In terms of assembly, monomer.

The catalysed reaction is a beta-lactam + H2O = a substituted beta-amino acid. In terms of biological role, hydrolyzes broad-spectrum beta-lactam antibiotics. Active against cephalosporins. In Proteus vulgaris, this protein is Beta-lactamase.